Consider the following 290-residue polypeptide: Xyloglucan endotransglycosylase/hydrolase protein 8 (290 aa).

The first 25 residues, 1–25, serve as a signal peptide directing secretion; it reads MAKHLALSVAAAVAVSWLAASSAAA. The 193-residue stretch at 26–218 folds into the GH16 domain; it reads AGFYEKFDVV…WSGAPFVVSY (193 aa). Glutamate 106 serves as the catalytic Nucleophile. Residue glutamate 110 is the Proton donor of the active site. Glutamate 110 serves as a coordination point for xyloglucan. Asparagine 114 carries N-linked (GlcNAc...) asparagine glycosylation. Xyloglucan-binding positions include 123–125, 133–135, and 197–198; these read NTN, KKE, and YW. 2 cysteine pairs are disulfide-bonded: cysteine 226/cysteine 240 and cysteine 273/cysteine 287. Arginine 278 provides a ligand contact to xyloglucan.

It belongs to the glycosyl hydrolase 16 family. XTH group 2 subfamily. In terms of processing, contains at least one intrachain disulfide bond essential for its enzymatic activity. In terms of tissue distribution, transcript strongly detected in leaf sheaths. Weakly or not expressed in leaf blades, roots and calli. Accumulation of transcript detected in shoot apex meristem, vascular tissues, young leaves, vascular bundles of leaf sheaths, and peripheral cylinder of the vascular bundles and fibers in the nodal region.

It localises to the secreted. Its subcellular location is the cell wall. The protein resides in the extracellular space. It is found in the apoplast. It carries out the reaction breaks a beta-(1-&gt;4) bond in the backbone of a xyloglucan and transfers the xyloglucanyl segment on to O-4 of the non-reducing terminal glucose residue of an acceptor, which can be a xyloglucan or an oligosaccharide of xyloglucan.. Catalyzes xyloglucan endohydrolysis (XEH) and/or endotransglycosylation (XET). Cleaves and religates xyloglucan polymers, an essential constituent of the primary cell wall, and thereby participates in cell wall construction of growing tissues. May promote elongation of three internodes (II, III and IV) and may be involved in cell elongation processes. The polypeptide is Xyloglucan endotransglycosylase/hydrolase protein 8 (XTH8) (Oryza sativa subsp. japonica (Rice)).